The primary structure comprises 117 residues: Large ribosomal subunit protein bL19 (117 aa).

It belongs to the bacterial ribosomal protein bL19 family.

This protein is located at the 30S-50S ribosomal subunit interface and may play a role in the structure and function of the aminoacyl-tRNA binding site. This is Large ribosomal subunit protein bL19 from Mycoplasmopsis pulmonis (strain UAB CTIP) (Mycoplasma pulmonis).